The sequence spans 441 residues: Histidinol dehydrogenase homolog (441 aa).

Residue His266 participates in Zn(2+) binding. Active-site proton acceptor residues include Glu334 and His335. Position 427 (His427) interacts with Zn(2+).

This sequence belongs to the histidinol dehydrogenase family. It depends on Zn(2+) as a cofactor.

This is Histidinol dehydrogenase homolog from Cereibacter sphaeroides (strain ATCC 17023 / DSM 158 / JCM 6121 / CCUG 31486 / LMG 2827 / NBRC 12203 / NCIMB 8253 / ATH 2.4.1.) (Rhodobacter sphaeroides).